The following is a 235-amino-acid chain: Fms-related tyrosine kinase 3 ligand (235 aa).

The signal sequence occupies residues 1–26 (MTVLAPAWSPTTYLLLLLLLSSGLSG). At 27-184 (TQDCSFQHSP…EATAPTAPQP (158 aa)) the chain is on the extracellular side. 3 disulfide bridges follow: Cys-30–Cys-111, Cys-70–Cys-153, and Cys-119–Cys-158. Asn-126 and Asn-149 each carry an N-linked (GlcNAc...) asparagine glycan. The helical transmembrane segment at 185–205 (PLLLLLLLPVGLLLLAAAWCL) threads the bilayer. Residues 206–235 (HWQRTRRRTPRPGEQVPPVPSPQDLLLVEH) are Cytoplasmic-facing. The interval 213 to 235 (RTPRPGEQVPPVPSPQDLLLVEH) is disordered.

Homodimer (isoform 2).

It is found in the cell membrane. Its subcellular location is the secreted. In terms of biological role, stimulates the proliferation of early hematopoietic cells by activating FLT3. Synergizes well with a number of other colony stimulating factors and interleukins. Required for the development of B cells, and dendritic cells (DCs). This is Fms-related tyrosine kinase 3 ligand (FLT3LG) from Homo sapiens (Human).